We begin with the raw amino-acid sequence, 1310 residues long: PAN2-PAN3 deadenylation complex catalytic subunit pan2 (1310 aa).

WD repeat units follow at residues 22–61, 67–105, 106–144, and 145–184; these read YHAG…RFTA, ETDG…SIRH, ESMQ…GEVV, and KELP…IKKQ. Residues 318–463 are linker; the sequence is QFTEIGIPPR…NNDHWSLRPE (146 aa). Residues 463 to 850 enclose the USP domain; that stretch reads EAPPEYRICE…MPVVVMFQVK (388 aa). Zn(2+)-binding residues include H525, C530, C535, C538, C645, C648, C700, and C703. Residues 897–1070 form the Exonuclease domain; the sequence is IAIDTEFIRL…EDAQTALKLY (174 aa). Positions 900, 902, 1009, and 1062 each coordinate a divalent metal cation. The segment at 1121–1169 is disordered; it reads TPPVPAPGTTEGSFEISNSSTATTGGSALSATGGMGSASASSSMPSTPV. Low complexity predominate over residues 1139 to 1168; that stretch reads SSTATTGGSALSATGGMGSASASSSMPSTP.

Belongs to the peptidase C19 family. PAN2 subfamily. As to quaternary structure, forms a heterotrimer with an asymmetric homodimer of the regulatory subunit par-2/pan3 to form the poly(A)-nuclease (PAN) deadenylation complex. A divalent metal cation serves as cofactor.

The protein resides in the cytoplasm. The catalysed reaction is Exonucleolytic cleavage of poly(A) to 5'-AMP.. With respect to regulation, positively regulated by the regulatory subunit par-2/pan3. In terms of biological role, catalytic subunit of the poly(A)-nuclease (PAN) deadenylation complex, one of two cytoplasmic mRNA deadenylases involved in mRNA turnover. PAN specifically shortens poly(A) tails of RNA and the activity is stimulated by poly(A)-binding protein pabp-1. PAN deadenylation is followed by rapid degradation of the shortened mRNA tails by the CCR4-NOT complex. Deadenylated mRNAs are then degraded by two alternative mechanisms, namely exosome-mediated 3'-5' exonucleolytic degradation, or deadenylation-dependent mRNA decaping and subsequent 5'-3' exonucleolytic degradation by rgb-30/xrn1. May also be involved in post-transcriptional maturation of mRNA poly(A) tails. The chain is PAN2-PAN3 deadenylation complex catalytic subunit pan2 (par-1) from Neurospora crassa (strain ATCC 24698 / 74-OR23-1A / CBS 708.71 / DSM 1257 / FGSC 987).